A 484-amino-acid polypeptide reads, in one-letter code: Rho guanine nucleotide exchange factor 35 (484 aa).

The tract at residues 139–418 (FSSDLGSEEE…ALIAPEDSPH (280 aa)) is disordered. Ser-184 is subject to Phosphoserine. Low complexity predominate over residues 217-237 (ESQGLLHPQEVQVLEEQGQQE). A compositionally biased stretch (basic and acidic residues) spans 266–278 (NDEKGEQKQKQEQ). The span at 299 to 309 (GLNDGEWEQED) shows a compositional bias: acidic residues. 2 stretches are compositionally biased toward basic and acidic residues: residues 323-368 (GEER…KEKG) and 394-404 (RSREEENEHHG).

The protein is Rho guanine nucleotide exchange factor 35 (ARHGEF35) of Homo sapiens (Human).